A 308-amino-acid polypeptide reads, in one-letter code: Aspartate carbamoyltransferase catalytic subunit (308 aa).

Carbamoyl phosphate-binding residues include Arg-55 and Thr-56. Lys-85 is a binding site for L-aspartate. Arg-106, His-135, and Gln-138 together coordinate carbamoyl phosphate. Positions 168 and 229 each coordinate L-aspartate. Residues Leu-267 and Pro-268 each contribute to the carbamoyl phosphate site.

It belongs to the aspartate/ornithine carbamoyltransferase superfamily. ATCase family. In terms of assembly, heterododecamer (2C3:3R2) of six catalytic PyrB chains organized as two trimers (C3), and six regulatory PyrI chains organized as three dimers (R2).

It catalyses the reaction carbamoyl phosphate + L-aspartate = N-carbamoyl-L-aspartate + phosphate + H(+). Its pathway is pyrimidine metabolism; UMP biosynthesis via de novo pathway; (S)-dihydroorotate from bicarbonate: step 2/3. Its function is as follows. Catalyzes the condensation of carbamoyl phosphate and aspartate to form carbamoyl aspartate and inorganic phosphate, the committed step in the de novo pyrimidine nucleotide biosynthesis pathway. In Laribacter hongkongensis (strain HLHK9), this protein is Aspartate carbamoyltransferase catalytic subunit.